Reading from the N-terminus, the 463-residue chain is Hexokinase-7 (463 aa).

The Hexokinase domain maps to 7–456 (AAAEQVVAAL…SGLGAALIAA (450 aa)). Residues 62-199 (NGTEEGLFYA…GLDMRVSALI (138 aa)) form a hexokinase small subdomain region. ADP is bound by residues Gly-76, Thr-77, and Asn-78. D-glucose is bound by residues Thr-165, Lys-166, Asn-200, and Asp-201. Residues 200–445 (NDTVGTLAAG…KSVAVKLAND (246 aa)) form a hexokinase large subdomain region. Thr-224 serves as a coordination point for ADP. Positions 227, 255, and 286 each coordinate D-glucose. Gly-410 provides a ligand contact to ADP.

It belongs to the hexokinase family. In terms of tissue distribution, expressed in roots, leaves, flowers, immature seeds and seed coat.

It localises to the cytoplasm. The enzyme catalyses a D-hexose + ATP = a D-hexose 6-phosphate + ADP + H(+). It catalyses the reaction D-fructose + ATP = D-fructose 6-phosphate + ADP + H(+). The catalysed reaction is D-glucose + ATP = D-glucose 6-phosphate + ADP + H(+). It functions in the pathway carbohydrate metabolism; hexose metabolism. The protein operates within carbohydrate degradation; glycolysis; D-glyceraldehyde 3-phosphate and glycerone phosphate from D-glucose: step 1/4. Its function is as follows. Fructose and glucose phosphorylating enzyme. Functions in sugar signaling via a glycolysis-dependent manner under aerobic conditions, but its signaling role is suppressed when oxygen is deficient. In Oryza sativa subsp. japonica (Rice), this protein is Hexokinase-7 (HXK7).